Reading from the N-terminus, the 218-residue chain is Phosphoglycolate phosphatase (218 aa).

Aspartate 7 serves as the catalytic Nucleophile. Mg(2+) is bound by residues aspartate 7, aspartate 9, and aspartate 167.

It belongs to the HAD-like hydrolase superfamily. CbbY/CbbZ/Gph/YieH family. Mg(2+) is required as a cofactor.

It catalyses the reaction 2-phosphoglycolate + H2O = glycolate + phosphate. The protein operates within organic acid metabolism; glycolate biosynthesis; glycolate from 2-phosphoglycolate: step 1/1. Specifically catalyzes the dephosphorylation of 2-phosphoglycolate. Is involved in the dissimilation of the intracellular 2-phosphoglycolate formed during the DNA repair of 3'-phosphoglycolate ends, a major class of DNA lesions induced by oxidative stress. The protein is Phosphoglycolate phosphatase of Cereibacter sphaeroides (Rhodobacter sphaeroides).